An 805-amino-acid polypeptide reads, in one-letter code: H(+)/Cl(-) exchange transporter 7 (805 aa).

Residues 1-49 are disordered; it reads MANVSKKVSWSGRDRDDEEAAPLLRRTARPGGGTPLLNGAGPGAARQSP. Residues 1–126 are Cytoplasmic-facing; it reads MANVSKKVSW…TAFRTVEIKR (126 aa). Residues S9 and S60 each carry the phosphoserine modification. The next 2 helical transmembrane spans lie at 127-159 and 174-197; these read WVIC…YRVI and FSLL…VAFI. Residues 203–207 carry the Selectivity filter part_1 motif; it reads GSGIP. Residue S204 coordinates chloride. The segment at residues 206-213 is an intramembrane region (helical); it reads IPQIKCFL. The next 2 helical transmembrane spans lie at 223–241 and 247–264; these read RLKT…VVGG and EGPM…ISQG. The short motif at 245–249 is the Selectivity filter part_2 element; that stretch reads GKEGP. 2 consecutive intramembrane regions (helical) follow at residues 288-300 and 304-312; these read FVSA…VSAA and PVGGVLFSL. The next 5 helical transmembrane spans lie at 322–341, 375–405, 410–432, 487–507, and 512–535; these read FLTW…LNFV, IPVF…FRIR, PCLQ…FVLI, PLTL…TYGL, and GVFI…LSYL. Positions 512–516 match the Selectivity filter part_3 motif; the sequence is GVFIP. F514 lines the chloride pocket. Positions 545–559 form an intramembrane region, helical; that stretch reads GKYALMGAAAQLGGI. Residues 560 to 562 constitute an intramembrane region (note=Loop between two helices); it reads VRM. Positions 563 to 574 form an intramembrane region, helical; it reads TLSLTVIMMEAT. The note=Loop between two helices intramembrane region spans 575–578; the sequence is SNVT. The chain crosses the membrane as a helical span at residues 579-597; sequence YGFPIMLVLMTAKIVGDVF. At 598 to 805 the chain is on the cytoplasmic side; it reads IEGLYDMHIQ…GLEELSLAQT (208 aa). Y602 is a chloride binding site. CBS domains follow at residues 631–695 and 741–799; these read MSTP…VFVE and MNPS…GLEE. ATP-binding positions include 658 to 660 and 783 to 786; these read HNG and TRKD. S801 is modified (phosphoserine).

The protein belongs to the chloride channel (TC 2.A.49) family. ClC-7/CLCN7 subfamily. Chloride channel 7 are heteromers of alpha (CLCN7) and beta (OSTM1) subunits. As to expression, brain and kidney.

It localises to the lysosome membrane. It carries out the reaction 2 chloride(in) + H(+)(out) = 2 chloride(out) + H(+)(in). Its function is as follows. Slowly voltage-gated channel mediating the exchange of chloride ions against protons. Functions as antiporter and contributes to the acidification of the lysosome lumen and may be involved in maintaining lysosomal pH. The CLC channel family contains both chloride channels and proton-coupled anion transporters that exchange chloride or another anion for protons. The presence of conserved gating glutamate residues is typical for family members that function as antiporters. The polypeptide is H(+)/Cl(-) exchange transporter 7 (Homo sapiens (Human)).